The sequence spans 896 residues: Histone-lysine N-methyltransferase CLF (896 aa).

2 disordered regions span residues 344–419 (DNLK…NRRI) and 459–514 (SGIK…DGCD). Positions 358 to 390 (GSSGQKTKSQQSESSSTARVSSESSESEVQLLS) are enriched in low complexity. Polar residues-rich tracts occupy residues 391 to 400 (NKSPQHSPGL), 465 to 476 (VVSSQCNSPSTR), and 485 to 498 (QMEN…AQSD). Positions 504–514 (NNEHSATDGCD) are enriched in basic and acidic residues. The CXC domain occupies 633-732 (RKRITERKDQ…TLGVPNQRGD (100 aa)). The region spanning 747-862 (QRVLLGRSDV…AGEELFYDYR (116 aa)) is the SET domain. S-adenosyl-L-methionine is bound at residue Y861. Basic and acidic residues predominate over residues 869–884 (PAWARKPEGPGAKDDA). Residues 869 to 896 (PAWARKPEGPGAKDDAQPSTGRAKKLAH) are disordered.

It belongs to the class V-like SAM-binding methyltransferase superfamily. Histone-lysine methyltransferase family. EZ subfamily. In terms of assembly, interacts with FIE1. Component of the polycomb repressive complex 2 (PRC2), composed of the core PRC2 components FIE2, EMF2B and EZ1. PRC2 methylates 'Lys-27' residues of histone H3 (H3K27me3), leading to transcriptional repression of the affected target gene. Widely expressed. Highly expressed in young panicle.

It catalyses the reaction L-lysyl(27)-[histone H3] + 3 S-adenosyl-L-methionine = N(6),N(6),N(6)-trimethyl-L-lysyl(27)-[histone H3] + 3 S-adenosyl-L-homocysteine + 3 H(+). Its function is as follows. Polycomb group (PcG) protein. Catalytic subunit of some PcG multiprotein complex, which methylates 'Lys-27' of histone H3, leading to transcriptional repression of the affected target genes. PcG proteins act by forming multiprotein complexes, which are required to maintain the transcriptionally repressive state of homeotic genes throughout development. PcG proteins are not required to initiate repression, but to maintain it during later stages of development. Involved in the regulation of flowering. Represses flowering under long day (LD) conditions. Regulates the trimethylation on histone H3 'Lys-27' (H3K27me3) of the flowering regulators MADS14, MADS15, RFT1, EHD1, HD3A and LF. The sequence is that of Histone-lysine N-methyltransferase CLF from Oryza sativa subsp. japonica (Rice).